A 131-amino-acid chain; its full sequence is Acanthoscurrin-2 (131 aa).

The residue at position 130 (K130) is a Lysine amide.

As to expression, expressed in hemocytes and secreted into the plasma following bacterial immune challenge.

It localises to the secreted. Antimicrobial protein. Strong activity against the Gram-negative bacterium E.coli SBS363 and yeast C.albicans. No detectable activity against the Gram-positive bacterium M.luteus. The polypeptide is Acanthoscurrin-2 (Acanthoscurria gomesiana (Tarantula spider)).